Here is a 238-residue protein sequence, read N- to C-terminus: LexA repressor (238 aa).

A DNA-binding region (H-T-H motif) is located at residues 26–46; the sequence is FDEMKDALDLASKSGIHRLIT. Active-site for autocatalytic cleavage activity residues include S158 and K196.

The protein belongs to the peptidase S24 family. In terms of assembly, homodimer.

It catalyses the reaction Hydrolysis of Ala-|-Gly bond in repressor LexA.. In terms of biological role, represses a number of genes involved in the response to DNA damage (SOS response), including recA and lexA. In the presence of single-stranded DNA, RecA interacts with LexA causing an autocatalytic cleavage which disrupts the DNA-binding part of LexA, leading to derepression of the SOS regulon and eventually DNA repair. This is LexA repressor from Sinorhizobium medicae (strain WSM419) (Ensifer medicae).